A 457-amino-acid polypeptide reads, in one-letter code: Ribosomal protein uS12 methylthiotransferase RimO (457 aa).

The MTTase N-terminal domain maps to 6–116; sequence PKVGFVSLGC…VMEAVHAALP (111 aa). The [4Fe-4S] cluster site is built by Cys-15, Cys-51, Cys-80, Cys-147, Cys-151, and Cys-154. A Radical SAM core domain is found at 133-371; that stretch reads LTPRHYAYLK…AKQAQISALR (239 aa). Residues 373 to 441 form the TRAM domain; the sequence is ESKIGSVQQC…EHDLFGDALP (69 aa).

Belongs to the methylthiotransferase family. RimO subfamily. It depends on [4Fe-4S] cluster as a cofactor.

The protein resides in the cytoplasm. The catalysed reaction is L-aspartate(89)-[ribosomal protein uS12]-hydrogen + (sulfur carrier)-SH + AH2 + 2 S-adenosyl-L-methionine = 3-methylsulfanyl-L-aspartate(89)-[ribosomal protein uS12]-hydrogen + (sulfur carrier)-H + 5'-deoxyadenosine + L-methionine + A + S-adenosyl-L-homocysteine + 2 H(+). Catalyzes the methylthiolation of an aspartic acid residue of ribosomal protein uS12. The protein is Ribosomal protein uS12 methylthiotransferase RimO of Xanthomonas axonopodis pv. citri (strain 306).